We begin with the raw amino-acid sequence, 397 residues long: uncharacterized protein (397 aa).

Residues 368–391 (TTKPGLHQPTQKRPTQTTSKPYIN) are disordered. Residues 375-388 (QPTQKRPTQTTSKP) show a composition bias toward polar residues.

This is an uncharacterized protein from Acanthamoeba polyphaga mimivirus (APMV).